The sequence spans 138 residues: Cysteine desulfuration protein SufE (138 aa).

Residue Cys-51 is the Cysteine persulfide intermediate of the active site.

It belongs to the SufE family. Homodimer. Interacts with SufS.

The protein resides in the cytoplasm. It functions in the pathway cofactor biosynthesis; iron-sulfur cluster biosynthesis. Participates in cysteine desulfuration mediated by SufS. Cysteine desulfuration mobilizes sulfur from L-cysteine to yield L-alanine and constitutes an essential step in sulfur metabolism for biosynthesis of a variety of sulfur-containing biomolecules. Functions as a sulfur acceptor for SufS, by mediating the direct transfer of the sulfur atom from the S-sulfanylcysteine of SufS, an intermediate product of cysteine desulfuration process. The sequence is that of Cysteine desulfuration protein SufE from Klebsiella pneumoniae subsp. pneumoniae (strain ATCC 700721 / MGH 78578).